A 482-amino-acid polypeptide reads, in one-letter code: Adenylosuccinate lyase (482 aa).

Substrate is bound by residues 14-15, 82-84, and 108-109; these read RY, RHD, and TS. His-156 serves as the catalytic Proton donor/acceptor. Lys-196 participates in a covalent cross-link: Glycyl lysine isopeptide (Lys-Gly) (interchain with G-Cter in ubiquitin). Gln-238 lines the substrate pocket. The active-site Proton donor/acceptor is the Ser-286. Positions 300, 326, 331, and 335 each coordinate substrate.

This sequence belongs to the lyase 1 family. Adenylosuccinate lyase subfamily. In terms of assembly, homotetramer. Residues from neighboring subunits contribute catalytic and substrate-binding residues to each active site.

The catalysed reaction is N(6)-(1,2-dicarboxyethyl)-AMP = fumarate + AMP. It carries out the reaction (2S)-2-[5-amino-1-(5-phospho-beta-D-ribosyl)imidazole-4-carboxamido]succinate = 5-amino-1-(5-phospho-beta-D-ribosyl)imidazole-4-carboxamide + fumarate. It participates in purine metabolism; AMP biosynthesis via de novo pathway; AMP from IMP: step 2/2. The protein operates within purine metabolism; IMP biosynthesis via de novo pathway; 5-amino-1-(5-phospho-D-ribosyl)imidazole-4-carboxamide from 5-amino-1-(5-phospho-D-ribosyl)imidazole-4-carboxylate: step 2/2. The sequence is that of Adenylosuccinate lyase (ADE13) from Saccharomyces cerevisiae (strain ATCC 204508 / S288c) (Baker's yeast).